Reading from the N-terminus, the 406-residue chain is ATPase ASNA1 homolog (406 aa).

ATP is bound at residue 21–28 (KGGVGKTT). Residue Asp-62 is part of the active site. Glu-300 and Asn-327 together coordinate ATP. Zn(2+) contacts are provided by Cys-339 and Cys-342.

This sequence belongs to the arsA ATPase family. In terms of assembly, homodimer.

It is found in the cytoplasm. Its subcellular location is the endoplasmic reticulum. In terms of biological role, ATPase required for the post-translational delivery of tail-anchored (TA) proteins to the endoplasmic reticulum. Recognizes and selectively binds the transmembrane domain of TA proteins in the cytosol. This complex then targets to the endoplasmic reticulum by membrane-bound receptors, where the tail-anchored protein is released for insertion. This process is regulated by ATP binding and hydrolysis. ATP binding drives the homodimer towards the closed dimer state, facilitating recognition of newly synthesized TA membrane proteins. ATP hydrolysis is required for insertion. Subsequently, the homodimer reverts towards the open dimer state, lowering its affinity for the membrane-bound receptor, and returning it to the cytosol to initiate a new round of targeting. This Leishmania braziliensis protein is ATPase ASNA1 homolog.